The chain runs to 99 residues: SVVKSEDFTLPAYVDRRDYPLPDVAHVKHLSASQKALKEKEKASWSSLSMDEKVELYRIKFKESFAEMNRRSNEWKTVVGTAMFFIGITALVIMWEKLY.

Topologically, residues 1–73 (SVVKSEDFTL…SFAEMNRRSN (73 aa)) are mitochondrial matrix. Lysine 4 is modified (N6-acetyllysine; alternate). Lysine 4 is modified (N6-succinyllysine; alternate). At lysine 28 the chain carries N6-acetyllysine. Phosphoserine is present on residues serine 31 and serine 33. Lysine 35 carries the N6-acetyllysine; alternate modification. Residue lysine 35 is modified to N6-succinyllysine; alternate. Position 42 is an N6-acetyllysine (lysine 42). A helical membrane pass occupies residues 74-99 (EWKTVVGTAMFFIGITALVIMWEKLY).

The protein belongs to the cytochrome c oxidase IV family. In terms of assembly, component of the cytochrome c oxidase (complex IV, CIV), a multisubunit enzyme composed of 14 subunits. The complex is composed of a catalytic core of 3 subunits MT-CO1, MT-CO2 and MT-CO3, encoded in the mitochondrial DNA, and 11 supernumerary subunits COX4I, COX5A, COX5B, COX6A, COX6B, COX6C, COX7A, COX7B, COX7C, COX8 and NDUFA4, which are encoded in the nuclear genome. The complex exists as a monomer or a dimer and forms supercomplexes (SCs) in the inner mitochondrial membrane with NADH-ubiquinone oxidoreductase (complex I, CI) and ubiquinol-cytochrome c oxidoreductase (cytochrome b-c1 complex, complex III, CIII), resulting in different assemblies (supercomplex SCI(1)III(2)IV(1) and megacomplex MCI(2)III(2)IV(2)). Interacts with PHB2; the interaction decreases in absence of SPHK2. Interacts with AFG1L. Interacts with ABCB7; this interaction allows the regulation of cellular iron homeostasis and cellular reactive oxygen species (ROS) levels in cardiomyocytes. Interacts with FLVCR2; this interaction occurs in the absence of heme and is disrupted upon heme binding. Interacts with IRGC.

The protein resides in the mitochondrion inner membrane. Its pathway is energy metabolism; oxidative phosphorylation. Its function is as follows. Component of the cytochrome c oxidase, the last enzyme in the mitochondrial electron transport chain which drives oxidative phosphorylation. The respiratory chain contains 3 multisubunit complexes succinate dehydrogenase (complex II, CII), ubiquinol-cytochrome c oxidoreductase (cytochrome b-c1 complex, complex III, CIII) and cytochrome c oxidase (complex IV, CIV), that cooperate to transfer electrons derived from NADH and succinate to molecular oxygen, creating an electrochemical gradient over the inner membrane that drives transmembrane transport and the ATP synthase. Cytochrome c oxidase is the component of the respiratory chain that catalyzes the reduction of oxygen to water. Electrons originating from reduced cytochrome c in the intermembrane space (IMS) are transferred via the dinuclear copper A center (CU(A)) of subunit 2 and heme A of subunit 1 to the active site in subunit 1, a binuclear center (BNC) formed by heme A3 and copper B (CU(B)). The BNC reduces molecular oxygen to 2 water molecules using 4 electrons from cytochrome c in the IMS and 4 protons from the mitochondrial matrix. The protein is Cytochrome c oxidase subunit 4 isoform 1, mitochondrial (COX4I1) of Mandrillus sphinx (Mandrill).